The sequence spans 96 residues: Growth-regulated alpha protein (96 aa).

An N-terminal signal peptide occupies residues Met-1–Gly-24. 2 disulfides stabilise this stretch: Cys-33–Cys-59 and Cys-35–Cys-75.

Belongs to the intercrine alpha (chemokine CxC) family. Monomer and homodimer. As to expression, at least expressed in the lung and trachea.

The protein localises to the secreted. Functionally, has chemotactic activity for neutrophils. Contributes to neutrophil activation during inflammation. This chain is Growth-regulated alpha protein (Cxcl1), found in Rattus norvegicus (Rat).